The following is a 259-amino-acid chain: uncharacterized protein (259 aa).

A disordered region spans residues 171–259; it reads LSKMPVPQSP…SYSTYEDDDF (89 aa). The segment covering 179 to 201 has biased composition (polar residues); that stretch reads SPSVPTMPSVNNDQPTQKPNKIT. Over residues 202–211 the composition is skewed to basic residues; the sequence is RNYKPKHQHN. A compositionally biased stretch (polar residues) spans 212-236; sequence YKPNYQPNYQPNYGQNCSNSHSNDY.

It localises to the virion. This is an uncharacterized protein from Acanthamoeba polyphaga (Amoeba).